The sequence spans 193 residues: MLRCGLACERCRWILPLLLLSAIAFDIIALAGRGWLQSSNHIQTSSLWWRCFDEGGGSGSYDDGCQSLMEYAWGRAAAATLFCGFIILCICFILSFFALCGPQMLVFLRVIGGLLALAAIFQIISLVIYPVKYTQTFRLHDNPAVNYIYNWAYGFGWAATIILIGCSFFFCCLPNYEDDLLGAAKPRYFYPPA.

4 helical membrane-spanning segments follow: residues R12–G32, L81–G101, V110–P130, and W151–C171.

Belongs to the TMEM47 family. As to expression, expressed in the stratified squamous skin epithelium of the skin and the tongue, but not in simple epithelia (at protein level). Expressed in the oral epithelium, tongue epithelium and skin (at protein level). More abundant in areas of lower flow stress in the inner curvature compared to the outer curvature regions of the aorta (at protein level). Expressed in luminal cells and myoepithelium cells of the mammary epithelium (at protein level). Expression increases during the early stages of pregnancy before decreasing before birth, expression continues to be weak during involution which mirrors decreased desmosome abundance and organization at these time points (at protein level). Expressed by epithelial cells at the mucosal surface in the proximal colon (at protein level). Expressed in apoptotic cells.

Its subcellular location is the cell junction. The protein resides in the desmosome. The protein localises to the cell membrane. It localises to the cytoplasm. Component of intercellular desmosome junctions. Plays a role in stratified epithelial integrity and cell-cell adhesion by promoting desmosome assembly. Thereby plays a role in barrier function of the skin against infection. Plays a role in mammary epithelial tissue homeostasis and remodeling during and after pregnancy, potentially via its involvement in desmosome cell-cell junctions. Required for tooth enamel development via facilitating desmosome-mediated ameloblast adhesion to the stratum intermedium during the transitional stage of amelogenesis. May also play a role in downstream transcriptional regulation of other genes involved in amelogenesis such as AMBN, ENAM, MMP20 and KLK4. Plays a role as an effector in the TP53-dependent apoptotic pathway. Positively regulates apoptosis in T-helper 17 (Th17) cell populations via caspase-dependent signaling. Promotes neutrophil transepithelial migration in response to chemoattractants such as hepoxilin A3 (HXA3), N-Formylmethionyl-leucyl-phenylalanine (fMLP) and CXCL8/IL-8. May act as a positive regulator of endothelial cell apoptosis in response to blood flow-derived shear stress. This chain is p53 apoptosis effector related to PMP-22, found in Mus musculus (Mouse).